We begin with the raw amino-acid sequence, 420 residues long: Signal recognition particle receptor FtsY (420 aa).

Basic and acidic residues predominate over residues 28-62; it reads DLDRAMGKVAPDNKKTRDAKAAADARLAAEAEEAK. Residues 28–118 are disordered; sequence DLDRAMGKVA…PETPESVGSR (91 aa). Residues 63 to 104 are compositionally biased toward low complexity; the sequence is AATAAEPAKSAESAKAEPAPAAQAEPEPAAAPKPESQPASKP. GTP-binding positions include 227–234, 310–314, and 372–375; these read GVNGTGKT, DTAGR, and SKLD.

Belongs to the GTP-binding SRP family. FtsY subfamily. In terms of assembly, part of the signal recognition particle protein translocation system, which is composed of SRP and FtsY.

The protein localises to the cell membrane. Its subcellular location is the cytoplasm. The enzyme catalyses GTP + H2O = GDP + phosphate + H(+). Its function is as follows. Involved in targeting and insertion of nascent membrane proteins into the cytoplasmic membrane. Acts as a receptor for the complex formed by the signal recognition particle (SRP) and the ribosome-nascent chain (RNC). The sequence is that of Signal recognition particle receptor FtsY from Bifidobacterium longum (strain NCC 2705).